Reading from the N-terminus, the 430-residue chain is MTSVVVVGTQWGDEGKGKITDFLSSDAEVIARYQGGDNAGHTIVIDNKKFKLHLIPSGIFFPEKISVIGNGVVVNPKSLVKELAYLHEEGVTTDNLRISDRAHVILPYHIKLDQLQEEAKGDNKIGTTIKGIGPAYMDKAARVGIRIADLLDRDIFAERLKTNLAEKNRLFEKMYDSAPIAFDEIFEEYYAYGQEIKKYVTDTSVILNDALDAGKRVLFEGAQGVMLDIDQGTYPFVTSSNPVAGGVTIGSGVGPSKINKVVGVCKAYTSRVGDGPFPTELFDEVGERIREIGHEYGTTTGRPRRVGWFDSVVMRHSRRVSGITNLSLNSIDVLSGLETVKICVAYDLDGKRIDHYPASLEQLKRCKPIYEELPGWSEDITGVRSLEDLPENARNYVRRIGELVGVRISTFSVGPGREQTNILESVWATI.

Residues 12 to 18 (GDEGKGK) and 40 to 42 (GHT) contribute to the GTP site. Residue Asp13 is the Proton acceptor of the active site. Residues Asp13 and Gly40 each coordinate Mg(2+). IMP-binding positions include 13–16 (DEGK), 38–41 (NAGH), Thr128, Arg142, Gln223, Thr238, and Arg302. His41 functions as the Proton donor in the catalytic mechanism. Substrate is bound at residue 298–304 (TTTGRPR). Residues Arg304, 330–332 (SID), and 412–414 (SVG) contribute to the GTP site.

Belongs to the adenylosuccinate synthetase family. In terms of assembly, homodimer. Mg(2+) serves as cofactor.

Its subcellular location is the cytoplasm. It carries out the reaction IMP + L-aspartate + GTP = N(6)-(1,2-dicarboxyethyl)-AMP + GDP + phosphate + 2 H(+). It participates in purine metabolism; AMP biosynthesis via de novo pathway; AMP from IMP: step 1/2. Plays an important role in the de novo pathway of purine nucleotide biosynthesis. Catalyzes the first committed step in the biosynthesis of AMP from IMP. The polypeptide is Adenylosuccinate synthetase (Streptococcus equi subsp. equi (strain 4047)).